Consider the following 322-residue polypeptide: Acetyl-coenzyme A carboxylase carboxyl transferase subunit beta (322 aa).

The 270-residue stretch at leucine 24–aspartate 293 folds into the CoA carboxyltransferase N-terminal domain.

It belongs to the AccD/PCCB family. Acetyl-CoA carboxylase is a heterohexamer composed of biotin carboxyl carrier protein (AccB), biotin carboxylase (AccC) and two subunits each of ACCase subunit alpha (AccA) and ACCase subunit beta (AccD).

The protein localises to the cytoplasm. The enzyme catalyses N(6)-carboxybiotinyl-L-lysyl-[protein] + acetyl-CoA = N(6)-biotinyl-L-lysyl-[protein] + malonyl-CoA. The protein operates within lipid metabolism; malonyl-CoA biosynthesis; malonyl-CoA from acetyl-CoA: step 1/1. In terms of biological role, component of the acetyl coenzyme A carboxylase (ACC) complex. Biotin carboxylase (BC) catalyzes the carboxylation of biotin on its carrier protein (BCCP) and then the CO(2) group is transferred by the transcarboxylase to acetyl-CoA to form malonyl-CoA. The sequence is that of Acetyl-coenzyme A carboxylase carboxyl transferase subunit beta from Rhodopseudomonas palustris (strain HaA2).